We begin with the raw amino-acid sequence, 115 residues long: Selenoprotein K homolog (115 aa).

The helical transmembrane segment at 29 to 49 (FIWGILNQITFFFSTLIGGTV) threads the bilayer. The segment at 48-115 (TVEPRRRPNN…NSASGSUGPK (68 aa)) is disordered. Over residues 58–84 (QGGGRRLAGFDGNGNVTGGSGVGGSGP) the composition is skewed to gly residues. Over residues 104–115 (ACNSASGSUGPK) the composition is skewed to polar residues. Position 112 (U112) is a non-standard amino acid, selenocysteine.

This sequence belongs to the selenoprotein K family.

It is found in the membrane. This chain is Selenoprotein K homolog (selk), found in Dictyostelium discoideum (Social amoeba).